The following is a 369-amino-acid chain: N-methyltransferase imqF (369 aa).

Belongs to the methyltransferase superfamily.

It functions in the pathway secondary metabolite biosynthesis. N-methyltransferase; part of the gene cluster that mediates the biosynthesis of imizoquins A to D, tripeptide-derived alkaloids that serve a protective role against oxidative stress that are essential for normal germination. ImqB is a canonical three-module NRPS that assembles the tripeptide backbone of the imizoquins via condensation of Trp, Tyr, and Leu-derived precursors. N-methylation by imqF and phenol oxidation by imqC, followed by cyclization via the FAD-dependent oxidase imqH carry out the three-step transformation of L-tyrosine into tetrahydroisoquinoline. Importantly, this sequence requires the presence of a free amine in the tyrosine moiety, indicating that isoquinoline formation occurs prior to peptide bond formation. The imidazolidin-4-one ring of imizoquins could form following additional oxidation of the methyl-derived bridgehead carbon by imqH. Lastly, O-methylation by imqG and leucine hydroxylation by imqE complete biosynthesis of the imizoquins. The chain is N-methyltransferase imqF from Aspergillus flavus (strain ATCC 200026 / FGSC A1120 / IAM 13836 / NRRL 3357 / JCM 12722 / SRRC 167).